Here is a 440-residue protein sequence, read N- to C-terminus: Gap junction alpha-8 protein (440 aa).

The stretch at 2–12 (GDWSFLGNILE) is an intramembrane region. Topologically, residues 13-21 (EVNEHSTVI) are cytoplasmic. A helical membrane pass occupies residues 22–42 (GRVWLTVLFIFRILILGTAAE). The Extracellular segment spans residues 43-71 (FVWGDEQSDFVCNTQQPGCENVCYDEAFP). Intrachain disulfides connect Cys-54/Cys-201, Cys-61/Cys-195, and Cys-65/Cys-190. A helical membrane pass occupies residues 72–92 (ISHIRLWVLQIIFVSTPSLMY). Topologically, residues 93–161 (VGHAVHHVRM…GTLLRTYVCH (69 aa)) are cytoplasmic. A disordered region spans residues 111–143 (AEELCQQSRSNGGERVPIAPDQASIRKSSSSSK). The helical transmembrane segment at 162–182 (IIFKTLFEVGFIVGHYFLYGF) threads the bilayer. The Extracellular segment spans residues 183 to 210 (RILPLYRCSRWPCPNVVDCFVSRPTEKT). A helical membrane pass occupies residues 211 to 231 (IFILFMLSVAFVSLFLNIMEM). The Cytoplasmic segment spans residues 232–440 (SHLGMKGIRS…SRARSDDLTI (209 aa)). Positions 338–440 (VEREEPPIEE…SRARSDDLTI (103 aa)) are disordered. Basic and acidic residues-rich tracts occupy residues 353-364 (VGEKKQEAEKVA) and 374-399 (PDRE…EKVT). Positions 423–432 (LSRLSKASSR) are enriched in low complexity.

The protein belongs to the connexin family. Alpha-type (group II) subfamily. A hemichannel or connexon is composed of a hexamer of connexins. A functional gap junction is formed by the apposition of two hemichannels. Forms heteromeric channels with GJA3. Detected in eye lens (at protein level). Eye lens.

The protein resides in the cell membrane. It is found in the cell junction. Its subcellular location is the gap junction. Its function is as follows. Structural component of eye lens gap junctions. Gap junctions are dodecameric channels that connect the cytoplasm of adjoining cells. They are formed by the docking of two hexameric hemichannels, one from each cell membrane. Small molecules and ions diffuse from one cell to a neighboring cell via the central pore. In Mus musculus (Mouse), this protein is Gap junction alpha-8 protein (Gja8).